Consider the following 410-residue polypeptide: Dual-specificity RNA methyltransferase RlmN (410 aa).

The interval 7 to 26 (VSSENLDGQQQSSSTPASPA) is disordered. A compositionally biased stretch (low complexity) spans 15–26 (QQQSSSTPASPA). The Proton acceptor role is filled by Glu-120. The region spanning 130 to 373 (TGSRKTLCIS…CTIRQTRGDD (244 aa)) is the Radical SAM core domain. Cys-137 and Cys-378 are oxidised to a cystine. The [4Fe-4S] cluster site is built by Cys-144, Cys-148, and Cys-151. S-adenosyl-L-methionine-binding positions include 200–201 (GE), Ser-232, 254–256 (SLH), and Asn-335. Cys-378 serves as the catalytic S-methylcysteine intermediate.

This sequence belongs to the radical SAM superfamily. RlmN family. [4Fe-4S] cluster serves as cofactor.

It localises to the cytoplasm. The catalysed reaction is adenosine(2503) in 23S rRNA + 2 reduced [2Fe-2S]-[ferredoxin] + 2 S-adenosyl-L-methionine = 2-methyladenosine(2503) in 23S rRNA + 5'-deoxyadenosine + L-methionine + 2 oxidized [2Fe-2S]-[ferredoxin] + S-adenosyl-L-homocysteine. The enzyme catalyses adenosine(37) in tRNA + 2 reduced [2Fe-2S]-[ferredoxin] + 2 S-adenosyl-L-methionine = 2-methyladenosine(37) in tRNA + 5'-deoxyadenosine + L-methionine + 2 oxidized [2Fe-2S]-[ferredoxin] + S-adenosyl-L-homocysteine. In terms of biological role, specifically methylates position 2 of adenine 2503 in 23S rRNA and position 2 of adenine 37 in tRNAs. m2A2503 modification seems to play a crucial role in the proofreading step occurring at the peptidyl transferase center and thus would serve to optimize ribosomal fidelity. This Acinetobacter baumannii (strain AB307-0294) protein is Dual-specificity RNA methyltransferase RlmN.